Here is a 509-residue protein sequence, read N- to C-terminus: 5-hydroxytryptamine receptor (509 aa).

Residues M1 to S99 lie on the Extracellular side of the membrane. N-linked (GlcNAc...) asparagine glycans are attached at residues N3, N47, N58, N68, N72, and N78. A helical transmembrane segment spans residues V100–L122. Residues E123–Y132 lie on the Cytoplasmic side of the membrane. The helical transmembrane segment at L133–V154 threads the bilayer. Topologically, residues S155 to D169 are extracellular. C168 and C246 are disulfide-bonded. Residues M170–M191 traverse the membrane as a helical segment. Topologically, residues D192–R210 are cytoplasmic. The helical transmembrane segment at I211–W233 threads the bilayer. At R234–T259 the chain is on the extracellular side. A helical transmembrane segment spans residues V260–A281. Residues R282 to T432 lie on the Cytoplasmic side of the membrane. The segment at S323 to R372 is disordered. The helical transmembrane segment at L433–F456 threads the bilayer. Topologically, residues V457–F465 are extracellular. A helical membrane pass occupies residues A466–F488. The Cytoplasmic segment spans residues S489–R509.

This sequence belongs to the G-protein coupled receptor 1 family.

It localises to the cell membrane. This is a receptor for 5-hydroxytryptamine (serotonin), a biogenic hormone that function as a neurotransmitter, a hormone, and a mitogen. This Lymnaea stagnalis (Great pond snail) protein is 5-hydroxytryptamine receptor.